A 352-amino-acid polypeptide reads, in one-letter code: C-C chemokine receptor type 5 (352 aa).

Over 1–30 the chain is Extracellular; the sequence is MDYQVSSPTYDIDYYTSEPCQKVNVKQIAA. Sulfotyrosine is present on Y3. Residues S6 and S7 are each glycosylated (O-linked (GalNAc...) serine). Sulfotyrosine occurs at positions 10, 14, and 15. Disulfide bonds link C20/C269 and C101/C178. The chain crosses the membrane as a helical span at residues 31-58; sequence RLLPPLYSLVFIFGFVGNILVVLILINC. The Cytoplasmic segment spans residues 59 to 68; that stretch reads KRLKSMTDIY. The chain crosses the membrane as a helical span at residues 69-89; that stretch reads LLNLAISDLFFLLTVPFWAHY. At 90–102 the chain is on the extracellular side; sequence AAAQWDFGNTMCQ. The chain crosses the membrane as a helical span at residues 103–124; it reads LLTGLYFIGFFSGIFFIILLTI. At 125–141 the chain is on the cytoplasmic side; it reads DRYLAIVHAVFALKART. A helical transmembrane segment spans residues 142-166; sequence VTFGVVTSVITWVVAVFASLPGIIF. The Extracellular portion of the chain corresponds to 167–198; that stretch reads TRSQREGLHYTCSSHFPYSQYQFWKNFQTLKI. Residues 199-218 form a helical membrane-spanning segment; that stretch reads VILGLVLPLLVMVICYSGIL. The Cytoplasmic portion of the chain corresponds to 219–235; the sequence is KTLLRCRNEKKRHRAVR. Residues 236 to 260 traverse the membrane as a helical segment; it reads LIFTIMIVYFLFWAPYNIVLLLNTF. The Extracellular segment spans residues 261-277; sequence QEFFGLNNCSSSNRLDQ. Residues 278–301 traverse the membrane as a helical segment; that stretch reads AMQVTETLGMTHCCINPIIYAFVG. Over 302–352 the chain is Cytoplasmic; that stretch reads EKFRNYLLVFFQKHIAKRFCKCCSIFQQEAPERASSVYTRSTGEQEISVGL. S-palmitoyl cysteine attachment occurs at residues C321, C323, and C324. Residues S336, S337, S342, and S349 each carry the phosphoserine; by BARK1 modification.

Belongs to the G-protein coupled receptor 1 family. As to quaternary structure, interacts with PRAF2. Efficient ligand binding to CCL3/MIP-1alpha and CCL4/MIP-1beta requires sulfation, O-glycosylation and sialic acid modifications. Glycosylation on Ser-6 is required for efficient binding of CCL4. Interacts with GRK2. Interacts with ARRB1 and ARRB2. Interacts with CNIH4. Interacts with S100A4; this interaction stimulates T-lymphocyte chemotaxis. Post-translationally, sulfated on at least 2 of the N-terminal tyrosines. Sulfation is required for efficient binding of the chemokines, CCL3 and CCL4. In terms of processing, palmitoylation in the C-terminal is important for cell surface expression. Phosphorylation on serine residues in the C-terminal is stimulated by binding CC chemokines especially by APO-RANTES. Post-translationally, O-glycosylated, but not N-glycosylated. Ser-6 appears to be the major site even if Ser-7 may be also O-glycosylated. Also sialylated glycans present which contribute to chemokine binding. Thr-16 and Ser-17 may also be glycosylated and, if so, with small moieties such as a T-antigen.

The protein resides in the cell membrane. Functionally, receptor for a number of inflammatory CC-chemokines including CCL3/MIP-1-alpha, CCL4/MIP-1-beta and RANTES and subsequently transduces a signal by increasing the intracellular calcium ion level. May play a role in the control of granulocytic lineage proliferation or differentiation. Participates in T-lymphocyte migration to the infection site by acting as a chemotactic receptor. The protein is C-C chemokine receptor type 5 (CCR5) of Semnopithecus entellus (Northern plains gray langur).